The primary structure comprises 324 residues: Glycerol-3-phosphate dehydrogenase [NAD(P)+] (324 aa).

Positions 11, 31, and 107 each coordinate NADPH. 2 residues coordinate sn-glycerol 3-phosphate: K107 and G135. A139 contributes to the NADPH binding site. Positions 190, 245, 255, 256, and 257 each coordinate sn-glycerol 3-phosphate. Residue K190 is the Proton acceptor of the active site. NADPH is bound at residue R256. The NADPH site is built by V278 and E279.

This sequence belongs to the NAD-dependent glycerol-3-phosphate dehydrogenase family.

It localises to the cytoplasm. The catalysed reaction is sn-glycerol 3-phosphate + NAD(+) = dihydroxyacetone phosphate + NADH + H(+). The enzyme catalyses sn-glycerol 3-phosphate + NADP(+) = dihydroxyacetone phosphate + NADPH + H(+). The protein operates within membrane lipid metabolism; glycerophospholipid metabolism. Its function is as follows. Catalyzes the reduction of the glycolytic intermediate dihydroxyacetone phosphate (DHAP) to sn-glycerol 3-phosphate (G3P), the key precursor for phospholipid synthesis. This chain is Glycerol-3-phosphate dehydrogenase [NAD(P)+], found in Anaplasma phagocytophilum (strain HZ).